The primary structure comprises 995 residues: tRNA wybutosine-synthesizing protein 2/3/4 (995 aa).

Residues 1-212 (MDFEKRKAAT…GFSVALASNG (212 aa)) form a tRNA wybutosine-synthesizing protein 3 homolog region. Kelch repeat units lie at residues 284–335 (EVIV…MVGD), 336–386 (FMFV…SVGT), 387–436 (KVYI…AYGS), 437–486 (QSFM…VYKH), and 488–535 (IGII…SILG). A tRNA wybutosine-synthesizing protein 2 homolog region spans residues 661–995 (ERSEENNLTK…RHLVADVRCR (335 aa)). S-adenosyl-L-methionine is bound by residues Lys828 and 896–897 (DN).

In the C-terminal section; belongs to the class I-like SAM-binding methyltransferase superfamily. TRM5/TYW2 family. It in the N-terminal section; belongs to the TYW3 family.

The catalysed reaction is 4-demethyl-7-[(3S)-3-amino-3-carboxypropyl]wyosine(37) in tRNA(Phe) + S-adenosyl-L-methionine = 7-[(3S)-3-amino-3-carboxypropyl]wyosine(37) in tRNA(Phe) + S-adenosyl-L-homocysteine + H(+). It carries out the reaction 4-demethylwyosine(37) in tRNA(Phe) + S-adenosyl-L-methionine = 4-demethyl-7-[(3S)-3-amino-3-carboxypropyl]wyosine(37) in tRNA(Phe) + S-methyl-5'-thioadenosine + H(+). It participates in tRNA modification; wybutosine-tRNA(Phe) biosynthesis. In terms of biological role, S-adenosyl-L-methionine-dependent transferase that acts as a component of the wybutosine biosynthesis pathway. Wybutosine is a hyper modified guanosine with a tricyclic base found at the 3'-position adjacent to the anticodon of eukaryotic phenylalanine tRNA. This Arabidopsis thaliana (Mouse-ear cress) protein is tRNA wybutosine-synthesizing protein 2/3/4.